The primary structure comprises 151 residues: Probable cGMP 3',5'-cyclic phosphodiesterase subunit delta (151 aa).

The protein belongs to the PDE6D/unc-119 family. Interacts with Pde6.

It is found in the nucleus. The protein resides in the cytoplasm. This is Probable cGMP 3',5'-cyclic phosphodiesterase subunit delta from Drosophila simulans (Fruit fly).